The primary structure comprises 862 residues: Protein kintoun (862 aa).

4 disordered regions span residues 208-229 (KLLP…RTTK), 564-602 (TKRE…KKER), 626-670 (GEGA…STMP), and 743-854 (RREV…QFKS). The segment covering 564-586 (TKREEHGEPECDEKDGSEAEKAR) has biased composition (basic and acidic residues). Residues 587–601 (TLQKAKRNSRKKKKE) are compositionally biased toward basic residues. Composition is skewed to basic and acidic residues over residues 748-757 (RRADARRMSE) and 766-785 (KDAH…HDEK).

It belongs to the PIH1 family. Kintoun subfamily.

The protein resides in the cytoplasm. Functionally, required for cytoplasmic pre-assembly of axonemal dyneins, thereby playing a central role in motility in cilia and flagella. Involved in pre-assembly of dynein arm complexes in the cytoplasm before intraflagellar transport loads them for the ciliary compartment. The protein is Protein kintoun of Anopheles gambiae (African malaria mosquito).